A 549-amino-acid polypeptide reads, in one-letter code: Probable protein kinase UbiB (549 aa).

The region spanning 123 to 501 (DFNEIPLASA…QQQAHKSNYL (379 aa)) is the Protein kinase domain. Residues 129–137 (LASASISQV) and Lys-152 contribute to the ATP site. Asp-287 serves as the catalytic Proton acceptor. 2 helical membrane passes run 496–516 (HKSN…TLLI) and 520–540 (ATLW…FVGW).

It belongs to the ABC1 family. UbiB subfamily.

Its subcellular location is the cell inner membrane. It functions in the pathway cofactor biosynthesis; ubiquinone biosynthesis [regulation]. Its function is as follows. Is probably a protein kinase regulator of UbiI activity which is involved in aerobic coenzyme Q (ubiquinone) biosynthesis. The polypeptide is Probable protein kinase UbiB (Shewanella baltica (strain OS223)).